Here is a 150-residue protein sequence, read N- to C-terminus: Transcriptional repressor NrdR (150 aa).

A zinc finger lies at cysteine 3–cysteine 34. The ATP-cone domain maps to proline 49–glutamate 139.

This sequence belongs to the NrdR family. The cofactor is Zn(2+).

In terms of biological role, negatively regulates transcription of bacterial ribonucleotide reductase nrd genes and operons by binding to NrdR-boxes. This is Transcriptional repressor NrdR from Geotalea daltonii (strain DSM 22248 / JCM 15807 / FRC-32) (Geobacter daltonii).